A 396-amino-acid chain; its full sequence is S-adenosylmethionine synthase (396 aa).

Residue His16 participates in ATP binding. Asp18 is a binding site for Mg(2+). Glu44 provides a ligand contact to K(+). The L-methionine site is built by Glu57 and Gln100. The segment at 100 to 110 (QSKDIALGVDK) is flexible loop. ATP contacts are provided by residues 176-178 (DGK), 243-244 (RF), Asp252, 258-259 (RK), Ala275, and Lys279. Asp252 lines the L-methionine pocket. Lys283 is a binding site for L-methionine.

This sequence belongs to the AdoMet synthase family. In terms of assembly, homotetramer; dimer of dimers. Mg(2+) is required as a cofactor. The cofactor is K(+).

It is found in the cytoplasm. The enzyme catalyses L-methionine + ATP + H2O = S-adenosyl-L-methionine + phosphate + diphosphate. It functions in the pathway amino-acid biosynthesis; S-adenosyl-L-methionine biosynthesis; S-adenosyl-L-methionine from L-methionine: step 1/1. Functionally, catalyzes the formation of S-adenosylmethionine (AdoMet) from methionine and ATP. The overall synthetic reaction is composed of two sequential steps, AdoMet formation and the subsequent tripolyphosphate hydrolysis which occurs prior to release of AdoMet from the enzyme. The protein is S-adenosylmethionine synthase of Lachnoclostridium phytofermentans (strain ATCC 700394 / DSM 18823 / ISDg) (Clostridium phytofermentans).